Here is a 405-residue protein sequence, read N- to C-terminus: Terminal uridylyltransferase cid1 (405 aa).

Ser90 provides a ligand contact to UTP. 2 residues coordinate Mg(2+): Asp101 and Asp103. Residues Ala168, Asn171, Thr172, Lys193, Lys197, Ser211, Tyr212, and His336 each coordinate UTP. Positions 267–336 constitute a PAP-associated domain; that stretch reads SLGSLLHGFF…AIEDPFEISH (70 aa). Residue Arg340 coordinates ATP. The segment at 377–405 is disordered; sequence APIPPRRQKKTDEQSNKKLLNETDGDNSE. Over residues 386–397 the composition is skewed to basic and acidic residues; that stretch reads KTDEQSNKKLLN.

The protein belongs to the DNA polymerase type-B-like family. It depends on Mg(2+) as a cofactor. Requires Mn(2+) as cofactor.

It is found in the cytoplasm. It catalyses the reaction RNA(n) + UTP = RNA(n)-3'-uridine ribonucleotide + diphosphate. It carries out the reaction RNA(n) + ATP = RNA(n)-3'-adenine ribonucleotide + diphosphate. In terms of biological role, cytoplasmic uridylyltransferase that mediates the terminal uridylation of mRNAs with short poly(A) tails such as such as act1, hcn1 and urg1 mRNAs, hence facilitating global mRNA decay. Uridylates the 3' ends of actin mRNAs upon S-phase arrest. Also has a weak poly(A) polymerase (PAP) activity. Residue His-336 is responsible for the specificity for UTP. Involved in cell cycle arrest where in association with crb2/rhp9 and chk1 it inhibits unscheduled mitosis. This is Terminal uridylyltransferase cid1 from Schizosaccharomyces pombe (strain 972 / ATCC 24843) (Fission yeast).